Consider the following 604-residue polypeptide: Aspartate--tRNA(Asp/Asn) ligase (604 aa).

Glu-175 serves as a coordination point for L-aspartate. The interval 199–202 is aspartate; the sequence is QQFK. Arg-221 and His-456 together coordinate L-aspartate. Residue 221 to 223 coordinates ATP; it reads RDE. Glu-496 contributes to the ATP binding site. Arg-503 is a binding site for L-aspartate. An ATP-binding site is contributed by 548–551; it reads GVDR.

The protein belongs to the class-II aminoacyl-tRNA synthetase family. Type 1 subfamily. In terms of assembly, homodimer.

The protein resides in the cytoplasm. The catalysed reaction is tRNA(Asx) + L-aspartate + ATP = L-aspartyl-tRNA(Asx) + AMP + diphosphate. Functionally, aspartyl-tRNA synthetase with relaxed tRNA specificity since it is able to aspartylate not only its cognate tRNA(Asp) but also tRNA(Asn). Reaction proceeds in two steps: L-aspartate is first activated by ATP to form Asp-AMP and then transferred to the acceptor end of tRNA(Asp/Asn). The sequence is that of Aspartate--tRNA(Asp/Asn) ligase from Methylorubrum extorquens (strain CM4 / NCIMB 13688) (Methylobacterium extorquens).